Here is a 125-residue protein sequence, read N- to C-terminus: Photosystem II extrinsic protein U (125 aa).

Residues 1–29 (MKRLLSWLTGLVVMAGLLFSLATPSGVQA) form the signal peptide.

The protein belongs to the PsbU family. In terms of assembly, PSII is composed of 1 copy each of membrane proteins PsbA, PsbB, PsbC, PsbD, PsbE, PsbF, PsbH, PsbI, PsbJ, PsbK, PsbL, PsbM, PsbT, PsbX, PsbY, PsbZ, Psb30/Ycf12, peripheral proteins PsbO, CyanoQ (PsbQ), PsbU, PsbV and a large number of cofactors. It forms dimeric complexes.

The protein localises to the cellular thylakoid membrane. Functionally, one of the extrinsic, lumenal subunits of photosystem II (PSII). PSII is a light-driven water plastoquinone oxidoreductase, using light energy to abstract electrons from H(2)O, generating a proton gradient subsequently used for ATP formation. The extrinsic proteins stabilize the structure of photosystem II oxygen-evolving complex (OEC), the ion environment of oxygen evolution and protect the OEC against heat-induced inactivation. In Synechococcus sp. (strain WH7803), this protein is Photosystem II extrinsic protein U.